The following is a 196-amino-acid chain: ATP-dependent Clp protease proteolytic subunit (196 aa).

The Nucleophile role is filled by Ser-99. The active site involves His-124.

This sequence belongs to the peptidase S14 family. As to quaternary structure, fourteen ClpP subunits assemble into 2 heptameric rings which stack back to back to give a disk-like structure with a central cavity, resembling the structure of eukaryotic proteasomes.

The protein localises to the cytoplasm. The enzyme catalyses Hydrolysis of proteins to small peptides in the presence of ATP and magnesium. alpha-casein is the usual test substrate. In the absence of ATP, only oligopeptides shorter than five residues are hydrolyzed (such as succinyl-Leu-Tyr-|-NHMec, and Leu-Tyr-Leu-|-Tyr-Trp, in which cleavage of the -Tyr-|-Leu- and -Tyr-|-Trp bonds also occurs).. Functionally, cleaves peptides in various proteins in a process that requires ATP hydrolysis. Has a chymotrypsin-like activity. Plays a major role in the degradation of misfolded proteins. This chain is ATP-dependent Clp protease proteolytic subunit, found in Nitratiruptor sp. (strain SB155-2).